The primary structure comprises 984 residues: Translation initiation factor IF-2 (984 aa).

A disordered region spans residues 32–402; that stretch reads PAKNATSTLT…TQPQRAAKRK (371 aa). Residues 89-123 are compositionally biased toward low complexity; that stretch reads PAETEAQASPAQPEAKAAAPAAEAEEAPAAKPAPA. Residues 126–136 show a composition bias toward basic and acidic residues; that stretch reads RKAEARTEAPR. Composition is skewed to low complexity over residues 154-172 and 187-197; these read APET…SAAP and AETTESAPAEP. Residues 198–220 show a composition bias toward basic and acidic residues; the sequence is AAEKAPAEKRRYEVSMEPEKDSV. Residues 255-270 are compositionally biased toward low complexity; sequence RPDPAAVQAQAAAAAQ. Over residues 271–283 the composition is skewed to basic and acidic residues; the sequence is AREERAERPDRGP. Over residues 308–334 the composition is skewed to low complexity; that stretch reads GRPAPRSGAPRPGGARPAAGFGQPAQA. In terms of domain architecture, tr-type G spans 482-651; the sequence is PRPPVVTIMG…ALQAEVLELK (170 aa). The segment at 491-498 is G1; that stretch reads GHVDHGKT. 491 to 498 is a binding site for GTP; sequence GHVDHGKT. Positions 516–520 are G2; that stretch reads GITQH. The segment at 537–540 is G3; it reads DTPG. GTP contacts are provided by residues 537 to 541 and 591 to 594; these read DTPGH and NKID. Residues 591-594 are G4; it reads NKID. The segment at 627 to 629 is G5; it reads SAK.

The protein belongs to the TRAFAC class translation factor GTPase superfamily. Classic translation factor GTPase family. IF-2 subfamily.

The protein resides in the cytoplasm. In terms of biological role, one of the essential components for the initiation of protein synthesis. Protects formylmethionyl-tRNA from spontaneous hydrolysis and promotes its binding to the 30S ribosomal subunits. Also involved in the hydrolysis of GTP during the formation of the 70S ribosomal complex. This chain is Translation initiation factor IF-2, found in Oleidesulfovibrio alaskensis (strain ATCC BAA-1058 / DSM 17464 / G20) (Desulfovibrio alaskensis).